Reading from the N-terminus, the 356-residue chain is Peptide chain release factor 1 (356 aa).

Position 234 is an N5-methylglutamine (Gln234).

This sequence belongs to the prokaryotic/mitochondrial release factor family. Methylated by PrmC. Methylation increases the termination efficiency of RF1.

It is found in the cytoplasm. Peptide chain release factor 1 directs the termination of translation in response to the peptide chain termination codons UAG and UAA. This Parafrankia sp. (strain EAN1pec) protein is Peptide chain release factor 1.